The sequence spans 502 residues: NAD(P)H-quinone oxidoreductase chain 4, chloroplastic (502 aa).

A run of 14 helical transmembrane segments spans residues 4 to 24 (FPWL…IFFF), 37 to 57 (ICIC…HFQL), 87 to 107 (VGPI…AWPV), 113 to 130 (LFHF…GLFS), 134 to 154 (LLLF…LLSM), 167 to 187 (FILY…GMGL), 208 to 228 (ALEI…LPII), 242 to 262 (HYST…YGLV), 272 to 292 (AHSI…IYAA), 305 to 325 (IAYS…SITD), 330 to 350 (GAIL…FLAG), 374 to 396 (IFTM…GFAA), 416 to 436 (ILIT…SLSM), and 464 to 484 (LFVS…PDFV).

Belongs to the complex I subunit 4 family.

It localises to the plastid. The protein localises to the chloroplast thylakoid membrane. It catalyses the reaction a plastoquinone + NADH + (n+1) H(+)(in) = a plastoquinol + NAD(+) + n H(+)(out). It carries out the reaction a plastoquinone + NADPH + (n+1) H(+)(in) = a plastoquinol + NADP(+) + n H(+)(out). The sequence is that of NAD(P)H-quinone oxidoreductase chain 4, chloroplastic from Ranunculus macranthus (Large buttercup).